Here is a 467-residue protein sequence, read N- to C-terminus: Zinc finger and BTB domain-containing protein 43 (467 aa).

N-acetylmethionine is present on methionine 1. Residues 33 to 97 enclose the BTB domain; that stretch reads CDVSIVVQGH…SYTGRLVMPA (65 aa). Disordered regions lie at residues 134–153 and 162–227; these read LNHG…GLVE and HTDF…EFHY. The span at 140 to 149 shows a compositional bias: polar residues; it reads HQSPSSSNYN. 2 stretches are compositionally biased toward basic and acidic residues: residues 164 to 174 and 182 to 194; these read DFPKAQELRDG and KDEL…EHEY. Glycyl lysine isopeptide (Lys-Gly) (interchain with G-Cter in SUMO2) cross-links involve residues lysine 182, lysine 247, lysine 297, and lysine 358. The segment at 373–394 adopts a C2H2-type 1; atypical zinc-finger fold; it reads YPCQCGKSFTHKSQRDRHMSMH. The segment at 400 to 422 adopts a C2H2-type 2 zinc-finger fold; the sequence is YGCSVCGKKFKMKHHLVGHMKIH. Phosphothreonine is present on threonine 423. The C2H2-type 3; atypical zinc finger occupies 428–450; the sequence is YECNICAKRFMWRDSFHRHVTSC. Lysine 458 is covalently cross-linked (Glycyl lysine isopeptide (Lys-Gly) (interchain with G-Cter in SUMO2)).

The protein belongs to the krueppel C2H2-type zinc-finger protein family. As to quaternary structure, interacts with BDP1.

It is found in the nucleus. Functionally, may be involved in transcriptional regulation. The polypeptide is Zinc finger and BTB domain-containing protein 43 (Zbtb43) (Mus musculus (Mouse)).